Here is a 286-residue protein sequence, read N- to C-terminus: MAVGKEIRTQISSINNTRKITRAMEKVAASKTRKAQDRMAASRPYAERIRQVVGHLANANPEYKHRYLTEREAKRVGYIVISSDRGLCGGLNVNVFKKAIRDMKQFADTGVEIDICAIGSKAVSFFRNYGGNVTAAHTGLGDAPKADDLVGSVKVMLDAFDEGRIDRLYVVSNEFVNTMTQNPTVEQLLPLKAEENTELKHHWDYIYEPEAVEILDELLVRYIESQVYQSVVENIACEQAARMLAMKNATDNAGDIIDELQLVYNKARQAAITQEISEIVSGAAAV.

It belongs to the ATPase gamma chain family. As to quaternary structure, F-type ATPases have 2 components, CF(1) - the catalytic core - and CF(0) - the membrane proton channel. CF(1) has five subunits: alpha(3), beta(3), gamma(1), delta(1), epsilon(1). CF(0) has three main subunits: a, b and c.

The protein resides in the cell inner membrane. Produces ATP from ADP in the presence of a proton gradient across the membrane. The gamma chain is believed to be important in regulating ATPase activity and the flow of protons through the CF(0) complex. This is ATP synthase gamma chain from Marinomonas sp. (strain MWYL1).